The sequence spans 493 residues: MSFKDLRSFIDHLETNGELKRISHPVDPHLEMTEIADRVLRAKGPALLFENPVGNDMPVLANLFGTPKRVAMALGKEDPLALRDVGELLAFLKEPEPPRGFKDAISKIPMFKQALNMPPKTVRNPPCQQVVKTGDEVDLTKLPIQHCWPGDVAPLVTWGLTITKGPRQKRQNLGIYRQQLLGRDKLIMRWLDHRGGALDFKDFKEKHPGERYPVVVALGADPVTILGAVTPVPDAMSEYAFAGLLRGERTEVCKALSCDLEVPATSEIILEGYIDPDEMAEEGPYGDHTGYYNETDSFPVFTVTHITHRKDAIYHSTYTGRPPDEPAMLGVALNEVFVPILRKQYPEIIDFYLPPEGCSYRMAVISIRKQYPGHAKRVMMGAWSFLRQFMYTKFIVVVDEDVNCRDWNDVIWAITTRMDPKRDTVMIENTPIDYLDFASPVAGLGSKMGMDATNKWEGETDREWGTPIVMDEAVKQKVDAIWDDLGIDDAPTL.

Residue N172 participates in Mn(2+) binding. Residues 175–177 (IYR), 189–191 (RWL), and 194–195 (RG) each bind prenylated FMN. Position 238 (E238) interacts with Mn(2+). The Proton donor role is filled by D287.

This sequence belongs to the UbiD family. In terms of assembly, homohexamer. The cofactor is prenylated FMN. It depends on Mn(2+) as a cofactor.

The protein localises to the cell membrane. The enzyme catalyses a 4-hydroxy-3-(all-trans-polyprenyl)benzoate + H(+) = a 2-(all-trans-polyprenyl)phenol + CO2. Its pathway is cofactor biosynthesis; ubiquinone biosynthesis. Its function is as follows. Catalyzes the decarboxylation of 3-octaprenyl-4-hydroxy benzoate to 2-octaprenylphenol, an intermediate step in ubiquinone biosynthesis. The chain is 3-octaprenyl-4-hydroxybenzoate carboxy-lyase from Shewanella pealeana (strain ATCC 700345 / ANG-SQ1).